Here is a 1183-residue protein sequence, read N- to C-terminus: DNA-directed RNA polymerase subunit beta (1183 aa).

Residues 1155 to 1183 are disordered; that stretch reads ADVDEDDVNEHKVNIQQSSIPESQKETTD.

The protein belongs to the RNA polymerase beta chain family. The RNAP catalytic core consists of 2 alpha, 1 beta, 1 beta' and 1 omega subunit. When a sigma factor is associated with the core the holoenzyme is formed, which can initiate transcription.

It catalyses the reaction RNA(n) + a ribonucleoside 5'-triphosphate = RNA(n+1) + diphosphate. Functionally, DNA-dependent RNA polymerase catalyzes the transcription of DNA into RNA using the four ribonucleoside triphosphates as substrates. The chain is DNA-directed RNA polymerase subunit beta from Staphylococcus carnosus (strain TM300).